Here is a 62-residue protein sequence, read N- to C-terminus: Ferredoxin-3 (62 aa).

4Fe-4S ferredoxin-type domains follow at residues 2–28 (SLKITEECTFCAACEPECPVNAISAGS) and 29–62 (DIYVIDESACTECEGYADSPACVAVCPAECIVKA). [4Fe-4S] cluster is bound by residues cysteine 9, cysteine 12, cysteine 15, cysteine 19, cysteine 38, cysteine 41, cysteine 50, and cysteine 54.

It depends on [4Fe-4S] cluster as a cofactor.

Its function is as follows. Ferredoxins are iron-sulfur proteins that transfer electrons in a wide variety of metabolic reactions. This is Ferredoxin-3 from Chlorobaculum tepidum (strain ATCC 49652 / DSM 12025 / NBRC 103806 / TLS) (Chlorobium tepidum).